Reading from the N-terminus, the 436-residue chain is Trigger factor (436 aa).

The PPIase FKBP-type domain occupies 162–247 (GDRVIIDFEG…LNNVSEPTLP (86 aa)).

This sequence belongs to the FKBP-type PPIase family. Tig subfamily.

It is found in the cytoplasm. The catalysed reaction is [protein]-peptidylproline (omega=180) = [protein]-peptidylproline (omega=0). Involved in protein export. Acts as a chaperone by maintaining the newly synthesized protein in an open conformation. Functions as a peptidyl-prolyl cis-trans isomerase. The chain is Trigger factor from Neisseria gonorrhoeae (strain ATCC 700825 / FA 1090).